Consider the following 546-residue polypeptide: Coatomer subunit delta (546 aa).

Residues 190–440 are interaction with DSL1; the sequence is NRFMGSKDPN…VIFTIPVFPQ (251 aa). The segment at 236 to 287 is disordered; the sequence is PMATSQRAGHSATGGMKLGGGAGRRAGAAPRPSAISSASSGTPPPPEEDVPE. A compositionally biased stretch (low complexity) spans 260–276; that stretch reads RAGAAPRPSAISSASSG. Threonine 277 is modified (phosphothreonine). The MHD domain occupies 288–546; that stretch reads NNGILISIKE…SLKSDEYLVQ (259 aa).

It belongs to the adaptor complexes medium subunit family. Delta-COP subfamily. As to quaternary structure, oligomeric complex that consists of at least the alpha, beta, beta', gamma, delta, epsilon and zeta subunits. Interacts with DSL1.

Its subcellular location is the cytoplasm. The protein resides in the golgi apparatus membrane. It is found in the cytoplasmic vesicle. The protein localises to the COPI-coated vesicle membrane. Functionally, the coatomer is a cytosolic protein complex that binds to dilysine motifs and reversibly associates with Golgi non-clathrin-coated vesicles, which further mediate biosynthetic protein transport from the ER, via the Golgi up to the trans Golgi network. Coatomer complex is required for budding from Golgi membranes, and is essential for the retrograde Golgi-to-ER transport of dilysine-tagged proteins. The polypeptide is Coatomer subunit delta (RET2) (Saccharomyces cerevisiae (strain ATCC 204508 / S288c) (Baker's yeast)).